The following is a 219-amino-acid chain: Small ribosomal subunit protein uS3c (219 aa).

The 72-residue stretch at 47–118 (IRNHVRNSSN…KLRMTLVEVL (72 aa)) folds into the KH type-2 domain.

This sequence belongs to the universal ribosomal protein uS3 family. Part of the 30S ribosomal subunit.

The protein resides in the plastid. Its subcellular location is the chloroplast. The chain is Small ribosomal subunit protein uS3c (rps3) from Chara vulgaris (Common stonewort).